The primary structure comprises 336 residues: F420-dependent glucose-6-phosphate dehydrogenase (336 aa).

Position 39 (D39) interacts with coenzyme F420-(gamma-Glu)n. The active-site Proton donor is H40. Residues T76 and 107–108 (TG) contribute to the coenzyme F420-(gamma-Glu)n site. E109 serves as the catalytic Proton acceptor. Coenzyme F420-(gamma-Glu)n is bound by residues N112, 177-178 (GG), and 180-181 (VV). T195, K198, K259, and R283 together coordinate substrate.

The protein belongs to the F420-dependent glucose-6-phosphate dehydrogenase family. In terms of assembly, homodimer.

The catalysed reaction is oxidized coenzyme F420-(gamma-L-Glu)(n) + D-glucose 6-phosphate + H(+) = 6-phospho-D-glucono-1,5-lactone + reduced coenzyme F420-(gamma-L-Glu)(n). Functionally, catalyzes the coenzyme F420-dependent oxidation of glucose 6-phosphate (G6P) to 6-phosphogluconolactone. Appears to have a role in resistance to oxidative stress, via its consumption of G6P that serves as a source of reducing power to combat oxidative stress in mycobacteria. This is F420-dependent glucose-6-phosphate dehydrogenase from Mycolicibacterium fortuitum (Mycobacterium fortuitum).